Here is a 126-residue protein sequence, read N- to C-terminus: Aspartate 1-decarboxylase (126 aa).

Ser25 functions as the Schiff-base intermediate with substrate; via pyruvic acid in the catalytic mechanism. Ser25 is subject to Pyruvic acid (Ser). Thr57 is a binding site for substrate. The active-site Proton donor is the Tyr58. 73–75 (GAA) serves as a coordination point for substrate.

Belongs to the PanD family. As to quaternary structure, heterooctamer of four alpha and four beta subunits. It depends on pyruvate as a cofactor. In terms of processing, is synthesized initially as an inactive proenzyme, which is activated by self-cleavage at a specific serine bond to produce a beta-subunit with a hydroxyl group at its C-terminus and an alpha-subunit with a pyruvoyl group at its N-terminus.

It localises to the cytoplasm. It carries out the reaction L-aspartate + H(+) = beta-alanine + CO2. It functions in the pathway cofactor biosynthesis; (R)-pantothenate biosynthesis; beta-alanine from L-aspartate: step 1/1. In terms of biological role, catalyzes the pyruvoyl-dependent decarboxylation of aspartate to produce beta-alanine. The sequence is that of Aspartate 1-decarboxylase from Salmonella choleraesuis (strain SC-B67).